Reading from the N-terminus, the 657-residue chain is Glycogen debranching enzyme (657 aa).

Asp-336 (nucleophile) is an active-site residue. The Proton donor role is filled by Glu-371. The interval 460–479 is disordered; it reads ANGEENRDGTNNNHSFNHGI.

This sequence belongs to the glycosyl hydrolase 13 family.

It catalyses the reaction Hydrolysis of (1-&gt;6)-alpha-D-glucosidic linkages to branches with degrees of polymerization of three or four glucose residues in limit dextrin.. It participates in glycan degradation; glycogen degradation. Removes maltotriose and maltotetraose chains that are attached by 1,6-alpha-linkage to the limit dextrin main chain, generating a debranched limit dextrin. The chain is Glycogen debranching enzyme from Enterobacter sp. (strain 638).